The chain runs to 613 residues: Ribosome-associated molecular chaperone SSB1 (613 aa).

A2 carries the post-translational modification N-acetylalanine. A nucleotide binding domain (NBD) region spans residues 2–391 (AEGVFQGAIG…ILTGQSTSDE (390 aa)). 16–18 (TTY) serves as a coordination point for ATP. Phosphothreonine is present on T47. ATP is bound by residues K73, 205 to 207 (GGT), 271 to 278 (ERAKRTLS), and G342. Positions 392-402 (TKDLLLLDVAP) are inter-domain linker. Residues 403–613 (LSLGVGMQGD…RVVTKAMSSR (211 aa)) form a substrate binding domain (SBD) region. The Contributes to ribosome binding motif lies at 428–430 (KRR). The residue at position 431 (T431) is a Phosphothreonine. Positions 516–612 (SEEIEKMVNQ…KRVVTKAMSS (97 aa)) are lid domain (SBDalpha). Positions 574–582 (IEAALSDAL) match the Nuclear export signal motif. The required for interaction with ribosomes stretch occupies residues 601–613 (GLKRVVTKAMSSR).

It belongs to the heat shock protein 70 family. Ssb-type Hsp70 subfamily. As to quaternary structure, binds to ribosomes. Binds close to the ribosomal tunnel exit via contacts with both ribosomal proteins RPL35, RPL39 and RPL19, and rRNA. Directly interacts with nascent polypeptides. This interaction is dependent on the ribosome-associated complex (RAC). Interacts with SSE1. Interacts with FES1. Interacts with NAP1.

The protein localises to the cytoplasm. The catalysed reaction is ATP + H2O = ADP + phosphate + H(+). Its function is as follows. Ribosome-bound, Hsp70-type chaperone that assists in the cotranslational folding of newly synthesized proteins in the cytosol. Stimulates folding by interacting with nascent chains, binding to short, largely hydrophobic sequences exposed by unfolded proteins, thereby stabilizing longer, more slowly translated, and aggregation-prone nascent polypeptides and domains that cannot fold stably until fully synthesized. The Hsp70-protein substrate interaction depends on ATP-binding and on allosteric regulation between the NBD and the SBD. The ATP-bound state is characterized by a fast exchange rate of substrate (low affinity state), while in the ADP-bound state exchange is much slower (high affinity state). During the Hsp70 cycle, the chaperone switches between the ATP-bound state (open conformation) and the ADP-bound state (closed conformation) by major conformational rearrangements involving mainly the lid domain. Ssb cooperates with a specific Hsp40/Hsp70 co-chaperone termed the ribosome-associated complex (RAC), which stimulates the ATPase activity of the ribosome-associated pool of Ssbs and switches it to the high affinity substrate binding state. Hsp110 chaperone SSE1 and FES1 act as nucleotide exchange factors that cause substrate release. The sequence is that of Ribosome-associated molecular chaperone SSB1 from Saccharomyces cerevisiae (strain ATCC 204508 / S288c) (Baker's yeast).